Reading from the N-terminus, the 79-residue chain is CATR tumorigenic conversion 1 protein (79 aa).

The sequence is that of CATR tumorigenic conversion 1 protein (CATR1) from Homo sapiens (Human).